The chain runs to 278 residues: Envelope glycoprotein L (278 aa).

The first 30 residues, 1 to 30 (MCRRPDCGFSFSPGPVVLLWCCLLLPIVSS), serve as a signal peptide directing secretion. The region spanning 43 to 256 (VPAECPELTR…DKYYAGLPPE (214 aa)) is the gL betaherpesvirus-type domain. A disulfide bond links cysteine 154 and cysteine 159.

This sequence belongs to the herpesviridae glycoprotein L (gL) family. Betaherpesvirinae gL subfamily. As to quaternary structure, interacts with glycoprotein H (gH); this interaction is necessary for the correct processing and cell surface expression of gH. Forms the envelope pentamer complex (PC) composed of gH, gL, UL128, UL130, and UL131A. The pentamer interacts with host NRP2. Forms the envelope trimer complex composed of gH, gL, and gO. The trimer interacts with host PDGFRA. The trimer also interacts with host EPHA2.

The protein resides in the virion membrane. It localises to the host cell membrane. The protein localises to the host Golgi apparatus. Its subcellular location is the host trans-Golgi network. Its function is as follows. The heterodimer glycoprotein H-glycoprotein L is required for the fusion of viral and plasma membranes leading to virus entry into the host cell. Acts as a functional inhibitor of gH and maintains gH in an inhibited form. Upon binding to host integrins, gL dissociates from gH leading to activation of the viral fusion glycoproteins gB and gH. In human cytomegalovirus, forms two distincts complexes to mediate viral entry, a trimer and a pentamer at the surface of the virion envelope. The gH-gL-gO trimer is required for infection in fibroblasts by interacting with host PDGFRA, and in glioblastoma cells by interacting with host EPHA2. The gH-gL-UL128-UL130-UL131A pentamer is essential for viral entry in epithelial, endothelial and myeloid cells via interaction with host NRP2. This Homo sapiens (Human) protein is Envelope glycoprotein L.